A 458-amino-acid polypeptide reads, in one-letter code: Chitin deacetylase 2 (458 aa).

An N-terminal signal peptide occupies residues 1–51; that stretch reads MIPSTAAAALLTLTAGVALAHPGCGGQEIGRRNVGGPMVYRRDVTDEASAA. 3 N-linked (GlcNAc...) asparagine glycosylation sites follow: asparagine 87, asparagine 99, and asparagine 125. Residues 158-348 form the NodB homology domain; it reads MTWGLGFDDG…IKSAFSYIVP (191 aa). The active-site Proton acceptor is the aspartate 165. Aspartate 165 lines the acetate pocket. Aspartate 166 is a Co(2+) binding site. A glycan (N-linked (GlcNAc...) asparagine) is linked at asparagine 169. Residues histidine 215 and histidine 219 each coordinate Co(2+). Tyrosine 256 is a binding site for acetate. 2 N-linked (GlcNAc...) asparagine glycosylation sites follow: asparagine 271 and asparagine 309. Histidine 322 (proton donor) is an active-site residue. N-linked (GlcNAc...) asparagine glycosylation is found at asparagine 326, asparagine 354, asparagine 363, asparagine 378, and asparagine 393. Residues 382-430 are disordered; that stretch reads STTQKDGSSSTNTSSSGSGSAAGSASATSSSDDSSSSGSASASSSSSNA. Serine 427 carries GPI-anchor amidated serine lipidation. The propeptide at 428–458 is removed in mature form; sequence SNASSGALGMFDGLSGVGLVLSGVVAGVMLL. Residue asparagine 429 is glycosylated (N-linked (GlcNAc...) asparagine).

It belongs to the polysaccharide deacetylase family. The cofactor is Co(2+). Glycosylated.

The protein localises to the secreted. The protein resides in the cell wall. It localises to the cell membrane. It catalyses the reaction [(1-&gt;4)-N-acetyl-beta-D-glucosaminyl](n) + n H2O = chitosan + n acetate. Its function is as follows. Hydrolyzes the N-acetamido groups of N-acetyl-D-glucosamine residues in chitin to form chitosan and acetate. Chitosan is required to anchor melanin to the cell wall, for maintenance of cell wall integrity, and for cytokinesis. The protein is Chitin deacetylase 2 of Cryptococcus neoformans var. neoformans serotype D (strain B-3501A) (Filobasidiella neoformans).